The sequence spans 173 residues: MSIILGIDPGSRITGYGVIRQQGRHLQYLGSGCIRTSEKELPGRLKQIYAGVTEIITQFQPDVFAIEQVFMAKNADSALKLGQARGSAIVAAVNADLPVHEYAARLIKQAVTGTGGADKVQVQHMVQHMLKLPAKPQADAADALGVAICHANTNKTLVALAGKATSARKGRYR.

Residues Asp-8, Glu-67, and Asp-139 contribute to the active site. Mg(2+) contacts are provided by Asp-8, Glu-67, and Asp-139.

Belongs to the RuvC family. As to quaternary structure, homodimer which binds Holliday junction (HJ) DNA. The HJ becomes 2-fold symmetrical on binding to RuvC with unstacked arms; it has a different conformation from HJ DNA in complex with RuvA. In the full resolvosome a probable DNA-RuvA(4)-RuvB(12)-RuvC(2) complex forms which resolves the HJ. Requires Mg(2+) as cofactor.

The protein localises to the cytoplasm. It catalyses the reaction Endonucleolytic cleavage at a junction such as a reciprocal single-stranded crossover between two homologous DNA duplexes (Holliday junction).. Functionally, the RuvA-RuvB-RuvC complex processes Holliday junction (HJ) DNA during genetic recombination and DNA repair. Endonuclease that resolves HJ intermediates. Cleaves cruciform DNA by making single-stranded nicks across the HJ at symmetrical positions within the homologous arms, yielding a 5'-phosphate and a 3'-hydroxyl group; requires a central core of homology in the junction. The consensus cleavage sequence is 5'-(A/T)TT(C/G)-3'. Cleavage occurs on the 3'-side of the TT dinucleotide at the point of strand exchange. HJ branch migration catalyzed by RuvA-RuvB allows RuvC to scan DNA until it finds its consensus sequence, where it cleaves and resolves the cruciform DNA. This is Crossover junction endodeoxyribonuclease RuvC from Vibrio campbellii (strain ATCC BAA-1116).